The sequence spans 214 residues: Ribosomal RNA small subunit methyltransferase G (214 aa).

Residues Gly73, Leu78, Val124–Glu125, and Arg139 contribute to the S-adenosyl-L-methionine site.

This sequence belongs to the methyltransferase superfamily. RNA methyltransferase RsmG family.

The protein localises to the cytoplasm. It catalyses the reaction guanosine(527) in 16S rRNA + S-adenosyl-L-methionine = N(7)-methylguanosine(527) in 16S rRNA + S-adenosyl-L-homocysteine. Functionally, specifically methylates the N7 position of guanine in position 527 of 16S rRNA. This chain is Ribosomal RNA small subunit methyltransferase G, found in Aeromonas hydrophila subsp. hydrophila (strain ATCC 7966 / DSM 30187 / BCRC 13018 / CCUG 14551 / JCM 1027 / KCTC 2358 / NCIMB 9240 / NCTC 8049).